The following is a 260-amino-acid chain: Snake venom serine protease serpentokallikrein-1 (260 aa).

An N-terminal signal peptide occupies residues 1-18; sequence MVLIRVLANLLILQLSYA. The propeptide occupies 19–24; it reads QRTSEL. The 227-residue stretch at 25–251 folds into the Peptidase S1 domain; it reads VIGGDECNIN…HLDWIKSIIA (227 aa). 6 cysteine pairs are disulfide-bonded: Cys-31/Cys-165, Cys-52/Cys-68, Cys-102/Cys-258, Cys-144/Cys-212, Cys-176/Cys-191, and Cys-202/Cys-227. His-67 serves as the catalytic Charge relay system. N-linked (GlcNAc...) asparagine glycans are attached at residues Asn-81 and Asn-105. Residue Asp-112 is the Charge relay system of the active site. N-linked (GlcNAc...) asparagine glycosylation is found at Asn-156 and Asn-172. Ser-206 acts as the Charge relay system in catalysis.

Belongs to the peptidase S1 family. Snake venom subfamily. Monomer. As to expression, expressed by the venom gland.

Its subcellular location is the secreted. In terms of biological role, snake venom serine protease that may act in the hemostasis system of the prey. This is Snake venom serine protease serpentokallikrein-1 from Protobothrops mucrosquamatus (Taiwan habu).